Reading from the N-terminus, the 1503-residue chain is DNA-directed RNA polymerase subunit beta' (1503 aa).

Residues C60, C62, C75, and C78 each coordinate Zn(2+). Residues D626, D628, and D630 each contribute to the Mg(2+) site. C1002, C1075, C1082, and C1085 together coordinate Zn(2+). Positions 1439–1503 (EESQQAEEAP…EEEDNDLPAF (65 aa)) are disordered. Acidic residues predominate over residues 1486–1503 (GDNDQSDAEEEDNDLPAF).

Belongs to the RNA polymerase beta' chain family. As to quaternary structure, the RNAP catalytic core consists of 2 alpha, 1 beta, 1 beta' and 1 omega subunit. When a sigma factor is associated with the core the holoenzyme is formed, which can initiate transcription. Mg(2+) serves as cofactor. The cofactor is Zn(2+).

It carries out the reaction RNA(n) + a ribonucleoside 5'-triphosphate = RNA(n+1) + diphosphate. DNA-dependent RNA polymerase catalyzes the transcription of DNA into RNA using the four ribonucleoside triphosphates as substrates. The chain is DNA-directed RNA polymerase subunit beta' from Chloroflexus aurantiacus (strain ATCC 29364 / DSM 637 / Y-400-fl).